Reading from the N-terminus, the 769-residue chain is Probable protease Ga0334635_1659 (769 aa).

The interval 118-167 is disordered; it reads VARGSSDNNGAPPLSFTLSHGDPKSDPEPSSPSRLVNTGLSEAERPESPL.

Functionally, probably a dedicated protease for substrate gasdermin bGSDM; cleaves the bGSDM precursor, releasing the pore-forming moiety, which integrates into the membrane and triggers cell death. Involved in defense against bacteriophages. Expression of gasdermin bGSDM and this neighboring protease is toxic in E.coli. The chain is Probable protease Ga0334635_1659 from Vitiosangium sp. (strain GDMCC 1.1324).